Reading from the N-terminus, the 740-residue chain is Catalase-peroxidase 2 (740 aa).

A signal peptide spans 1–27 (MFKKTKPRISILALTISCAIYSGAALA). The segment at residues 106–228 (WHSAGTYRIY…LAAVQMGLIY (123 aa)) is a cross-link (tryptophyl-tyrosyl-methioninium (Trp-Tyr) (with M-254)). Catalysis depends on H107, which acts as the Proton acceptor. A cross-link (tryptophyl-tyrosyl-methioninium (Tyr-Met) (with W-106)) is located at residues 228–254 (YVNPEGPNGVPDPLLAAKDIRDTFGRM). H269 contributes to the heme b binding site.

This sequence belongs to the peroxidase family. Peroxidase/catalase subfamily. Homodimer or homotetramer. It depends on heme b as a cofactor. Post-translationally, formation of the three residue Trp-Tyr-Met cross-link is important for the catalase, but not the peroxidase activity of the enzyme.

It carries out the reaction H2O2 + AH2 = A + 2 H2O. The catalysed reaction is 2 H2O2 = O2 + 2 H2O. In terms of biological role, bifunctional enzyme with both catalase and broad-spectrum peroxidase activity. The chain is Catalase-peroxidase 2 from Cellvibrio japonicus (strain Ueda107) (Pseudomonas fluorescens subsp. cellulosa).